The chain runs to 130 residues: Acyl carrier protein 2, chloroplastic (130 aa).

Residues 1 to 48 (MASITGSSVSFKCAPLQSSFNSKNYALKSSVTFWRRTPVMPRGLSVSC) constitute a chloroplast transit peptide. The region spanning 52–127 (PEMVTKVSDI…EAADMIEALQ (76 aa)) is the Carrier domain. Residue Ser-87 is modified to O-(pantetheine 4'-phosphoryl)serine.

This sequence belongs to the acyl carrier protein (ACP) family. Post-translationally, 4'-phosphopantetheine is transferred from CoA to a specific serine of apo-ACP by acpS. This modification is essential for activity because fatty acids are bound in thioester linkage to the sulfhydryl of the prosthetic group. Roots, leaves and seeds.

It is found in the plastid. Its subcellular location is the chloroplast. It participates in lipid metabolism; fatty acid biosynthesis. In terms of biological role, carrier of the growing fatty acid chain in fatty acid biosynthesis. This Spinacia oleracea (Spinach) protein is Acyl carrier protein 2, chloroplastic (ACL1.2).